The primary structure comprises 496 residues: UDP-N-acetylmuramoyl-L-alanyl-D-glutamate--2,6-diaminopimelate ligase (496 aa).

A UDP-N-acetyl-alpha-D-muramoyl-L-alanyl-D-glutamate-binding site is contributed by serine 32. An ATP-binding site is contributed by 116–122 (GTNGKTT). UDP-N-acetyl-alpha-D-muramoyl-L-alanyl-D-glutamate-binding positions include 158 to 159 (TT), serine 185, glutamine 191, and arginine 193. Lysine 225 is modified (N6-carboxylysine). Meso-2,6-diaminopimelate is bound by residues arginine 389, 413-416 (DNPR), glycine 464, and glutamate 468. The Meso-diaminopimelate recognition motif signature appears at 413 to 416 (DNPR).

Belongs to the MurCDEF family. MurE subfamily. Mg(2+) serves as cofactor. Carboxylation is probably crucial for Mg(2+) binding and, consequently, for the gamma-phosphate positioning of ATP.

The protein localises to the cytoplasm. The enzyme catalyses UDP-N-acetyl-alpha-D-muramoyl-L-alanyl-D-glutamate + meso-2,6-diaminopimelate + ATP = UDP-N-acetyl-alpha-D-muramoyl-L-alanyl-gamma-D-glutamyl-meso-2,6-diaminopimelate + ADP + phosphate + H(+). Its pathway is cell wall biogenesis; peptidoglycan biosynthesis. Catalyzes the addition of meso-diaminopimelic acid to the nucleotide precursor UDP-N-acetylmuramoyl-L-alanyl-D-glutamate (UMAG) in the biosynthesis of bacterial cell-wall peptidoglycan. The protein is UDP-N-acetylmuramoyl-L-alanyl-D-glutamate--2,6-diaminopimelate ligase of Trichormus variabilis (strain ATCC 29413 / PCC 7937) (Anabaena variabilis).